Consider the following 516-residue polypeptide: Extracellular endo-inulinase inuA (516 aa).

The signal sequence occupies residues 1-25 (MLNPKVAYMVWMTCLGLMLPSQAQS). Substrate contacts are provided by residues 40–43 (WMNE), Gln59, Trp67, and 99–100 (FT). The active site involves Glu43. Asn109 carries an N-linked (GlcNAc...) asparagine glycan. Substrate is bound at residue 175-176 (RD). N-linked (GlcNAc...) asparagine glycosylation occurs at Asn210. Glu233 contributes to the substrate binding site. Residues Asn372 and Asn419 are each glycosylated (N-linked (GlcNAc...) asparagine).

This sequence belongs to the glycosyl hydrolase 32 family.

It is found in the secreted. It carries out the reaction Endohydrolysis of (2-&gt;1)-beta-D-fructosidic linkages in inulin.. With respect to regulation, activity is stimulated by Mn(2+), Fe(2+) Ca(2+) metal ions and DTT; and inhibited by glucose, Mg(2+), Zn(2+), Cu(2+), Hg(2+), Al(3+), and Fe(3+). Endo-inulinase involved in utilization of the plant storage polymer inulin, consisting of fructooligosaccharides with a degree of polymerization (DP) value from 2 to 60. The sequence is that of Extracellular endo-inulinase inuA (inuA) from Aspergillus niger.